A 171-amino-acid chain; its full sequence is Dual-action ribosomal maturation protein DarP (171 aa).

The segment at 1–30 (MPKRPAENPEQSDDFVSKSQKKREMAERQE) is disordered.

It belongs to the DarP family.

It localises to the cytoplasm. Its function is as follows. Member of a network of 50S ribosomal subunit biogenesis factors which assembles along the 30S-50S interface, preventing incorrect 23S rRNA structures from forming. Promotes peptidyl transferase center (PTC) maturation. In Idiomarina loihiensis (strain ATCC BAA-735 / DSM 15497 / L2-TR), this protein is Dual-action ribosomal maturation protein DarP.